Here is a 142-residue protein sequence, read N- to C-terminus: Galactose-6-phosphate isomerase subunit LacA 2 (142 aa).

Belongs to the LacAB/RpiB family. In terms of assembly, heteromultimeric protein consisting of LacA and LacB.

It carries out the reaction aldehydo-D-galactose 6-phosphate = keto-D-tagatose 6-phosphate. The protein operates within carbohydrate metabolism; D-galactose 6-phosphate degradation; D-tagatose 6-phosphate from D-galactose 6-phosphate: step 1/1. This Streptococcus pyogenes serotype M1 protein is Galactose-6-phosphate isomerase subunit LacA 2.